A 554-amino-acid chain; its full sequence is Arginine--tRNA ligase (554 aa).

A 'HIGH' region motif is present at residues 129 to 139 (ANPTGPLHIGH).

Belongs to the class-I aminoacyl-tRNA synthetase family. In terms of assembly, monomer.

Its subcellular location is the cytoplasm. The enzyme catalyses tRNA(Arg) + L-arginine + ATP = L-arginyl-tRNA(Arg) + AMP + diphosphate. This is Arginine--tRNA ligase from Syntrophotalea carbinolica (strain DSM 2380 / NBRC 103641 / GraBd1) (Pelobacter carbinolicus).